The following is a 922-amino-acid chain: Putative ATP-dependent helicase/translocase YwqA (922 aa).

The Helicase ATP-binding domain maps to Leu462–Gly625. An ATP-binding site is contributed by Asp475–Thr482. A DEAQ box motif is present at residues Asp576–Gln579. In terms of domain architecture, Helicase C-terminal spans Lys753–Ser907.

This sequence belongs to the SNF2/RAD54 helicase family. In terms of assembly, interacts with the RNA polymerase core.

This is Putative ATP-dependent helicase/translocase YwqA (ywqA) from Bacillus subtilis (strain 168).